The primary structure comprises 234 residues: Conidial surface nicotinamide adenine dinucleotide glycohydrolase nadA (234 aa).

Positions 1 to 20 (MIFTNAILVISALLPATVLS) are cleaved as a signal peptide. A thump region spans residues 21–117 (LQHTEDSLFP…LDTEEQPILG (97 aa)). 2 disulfides stabilise this stretch: cysteine 33-cysteine 80 and cysteine 38-cysteine 50. 3 N-linked (GlcNAc...) asparagine glycosylation sites follow: asparagine 45, asparagine 95, and asparagine 118. Positions 120–212 (TLPVGMKLDR…GLIDDGYLRR (93 aa)) constitute a TNT domain. Residue arginine 129 is part of the active site. NAD(+)-binding residues include phenylalanine 130, threonine 136, and arginine 148. The active site involves glutamine 194. Positions 216, 219, 220, and 223 each coordinate Ca(2+).

Belongs to the fungal surface NADase family. In terms of assembly, homodimer. Post-translationally, N-glycosylated.

It localises to the secreted. The enzyme catalyses NAD(+) + H2O = ADP-D-ribose + nicotinamide + H(+). The catalysed reaction is NADP(+) + H2O = ADP-D-ribose 2'-phosphate + nicotinamide + H(+). With respect to regulation, the catalytic activity is positively regulated by calcium via its binding to the calcium-binding site. In terms of biological role, conidial surface nicotinamide adenine dinucleotide glycohydrolase that cleave NAD(+) and NADP(+) but not their reduced counterparts, NADH and NADPH. Lacks both ADP-ribosyl cyclase and base exchange activity and does not mediate synthesis of calcium messengers cADPR or NAADP. Plays a role in pathogenicity by depleting the host's NAD(+) pool. The polypeptide is Conidial surface nicotinamide adenine dinucleotide glycohydrolase nadA (Aspergillus fumigatus (strain ATCC MYA-4609 / CBS 101355 / FGSC A1100 / Af293) (Neosartorya fumigata)).